The sequence spans 867 residues: MALLSSSLSSQIPTGSHPLTHTQCIPHFSTTINAGISAGKPRSFYLRWGKGSNKIIACVGEGTTSLPYQSAEKTDSLSAPTLVKREFPPGFWKDHVIDSLTSSHKVSAAEEKRMETLISEIKNIFRSMGYGETNPSAYDTAWVARIPAVDGSEHPEFPETLEWILQNQLKDGSWGEGFYFLAYDRILATLACIITLTLWRTGETQIRKGIEFFKTQAGKIEDEADSHRPSGFEIVFPAMLKEAKVLGLDLPYELPFIKQIIEKREAKLERLPTNILYALPTTLLYSLEGLQEIVDWEKIIKLQSKDGSFLTSPASTAAVFMRTGNKKCLEFLNFVLKKFGNHVPCHYPLDLFERLWAVDTVERLGIDHHFKEEIKDALDYVYSHWDERGIGWARENPIPDIDDTAMGLRILRLHGYNVSSDVLKTFRDENGEFFCFLGQTQRGVTDMLNVNRCSHVAFPGETIMQEAKLCTERYLRNALEDVGAFDKWALKKNIRGEVEYALKYPWHRSMPRLEARSYIEHYGPNDVWLGKTMYMMPYISNLKYLELAKLDFNHVQSLHQKELRDLRRWWKSSGLSELKFTRERVTEIYFSAASFIFEPEFATCRDVYTKISIFTVILDDLYDAHGTLDNLELFSEGVKRWDLSLVDRMPQDMKICFTVLYNTVNEIAVEGRKRQGRDVLGYIRNVLEILLAAHTKEAEWSAARYVPSFDEYIENASVSISLGTLVLISVLFTGEILTDDVLSKIGRGSRFLQLMGLTGRLVNDTKTYEAERGQGEVASAVQCYMKEHPEISEEEALKHVYTVMENALDELNREFVNNRDVPDSCRRLVFETARIMQLFYMEGDGLTLSHEMEIKEHVKNCLFQPVA.

The transit peptide at 1–68 directs the protein to the chloroplast; the sequence is MALLSSSLSS…VGEGTTSLPY (68 aa). Lys-267 serves as a coordination point for substrate. Positions 400 and 402 each coordinate Mg(2+). Positions 400–403 match the DXDD motif motif; sequence DIDD. Residue Lys-487 participates in substrate binding. Asp-619, Asp-623, Asn-763, Thr-767, and Glu-771 together coordinate Mg(2+). Residues 619–623 carry the DDXXD motif motif; sequence DDLYD.

The protein belongs to the terpene synthase family. Tpsd subfamily. It depends on Mg(2+) as a cofactor.

The protein localises to the plastid. It is found in the chloroplast. The enzyme catalyses (2E,6E,10E)-geranylgeranyl diphosphate = (+)-copalyl diphosphate. It catalyses the reaction (+)-copalyl diphosphate = isopimara-7,15-diene + diphosphate. It participates in terpene metabolism; oleoresin biosynthesis. Functionally, involved in defensive oleoresin formation in conifers in response to insect attack or other injury. Involved in diterpene (C20) olefins biosynthesis. Bifunctional enzyme that catalyzes two sequential cyclizations of geranylgeranyl diphosphate (GGPP) to isopimara-7,15-diene. The polypeptide is Bifunctional isopimaradiene synthase, chloroplastic (TPS-ISO) (Picea abies (Norway spruce)).